The chain runs to 527 residues: Coiled-coil domain-containing protein 148 (527 aa).

Coiled-coil stretches lie at residues 289 to 353 and 401 to 438; these read LAKD…TEIK and LEKRLMERKKLALQEVQEEEERERRLEALRKQVAVAVQ.

The sequence is that of Coiled-coil domain-containing protein 148 (Ccdc148) from Mus musculus (Mouse).